A 721-amino-acid polypeptide reads, in one-letter code: BBSome complex member bbs-7 (721 aa).

Part of BBSome complex, that contains at least bbs-1, bbs-2, bbs-4, bbs-5, osm-12, bbs-8/ttc-8 and bbs-9. Interacts with bbs-1. In terms of tissue distribution, expressed in ciliated cells including amphid and both inner and outer labial neurons of the head and in both phasmid neurons PHA and PHB in the tail at larval stages L1 and L2.

Its subcellular location is the cell projection. It is found in the cilium. The protein localises to the cytoplasm. The protein resides in the cytoskeleton. It localises to the cilium basal body. Its subcellular location is the cilium axoneme. Component of the BBSome complex. The BBSome complex is thought to function as a coat complex required for sorting of specific membrane proteins to the primary cilia. The BBSome complex is required for ciliogenesis but is dispensable for centriolar satellite function. Required for proper BBSome complex assembly and its ciliary localization. Required for cilia biogenesis and both the assembly and movement of intraflagellar transport proteins along the ciliary axoneme. Plays a role in the removal of degraded mechanosensory receptors within the cilia. Plays a role in guanylyl cyclase localization in the ring-like structures at the base of the finger compartment in AFD sensory neurons. In ciliated sensory neurons, required for the sensation of nitric oxide and avoidance of NO-producing organisms like P.aeruginosa. The polypeptide is BBSome complex member bbs-7 (Caenorhabditis elegans).